The primary structure comprises 305 residues: UDP-N-acetylenolpyruvoylglucosamine reductase (305 aa).

One can recognise an FAD-binding PCMH-type domain in the interval 35 to 214 (VGGPAQALFT…RARMNEVQAH (180 aa)). The active site involves Arg179. The Proton donor role is filled by Ser228. The active site involves Glu298.

The protein belongs to the MurB family. The cofactor is FAD.

It is found in the cytoplasm. The catalysed reaction is UDP-N-acetyl-alpha-D-muramate + NADP(+) = UDP-N-acetyl-3-O-(1-carboxyvinyl)-alpha-D-glucosamine + NADPH + H(+). Its pathway is cell wall biogenesis; peptidoglycan biosynthesis. Its function is as follows. Cell wall formation. This is UDP-N-acetylenolpyruvoylglucosamine reductase from Nitrobacter winogradskyi (strain ATCC 25391 / DSM 10237 / CIP 104748 / NCIMB 11846 / Nb-255).